Consider the following 127-residue polypeptide: Fluoride-specific ion channel FluC (127 aa).

A run of 4 helical transmembrane segments spans residues 4–24 (LLLA…LLSM), 35–55 (LGTL…FAWF), 71–91 (TGFC…VFLL), and 103–123 (VFVN…LFSA). Positions 75 and 78 each coordinate Na(+).

It belongs to the fluoride channel Fluc/FEX (TC 1.A.43) family.

The protein localises to the cell inner membrane. It carries out the reaction fluoride(in) = fluoride(out). Its activity is regulated as follows. Na(+) is not transported, but it plays an essential structural role and its presence is essential for fluoride channel function. Fluoride-specific ion channel. Important for reducing fluoride concentration in the cell, thus reducing its toxicity. This Shigella flexneri serotype 5b (strain 8401) protein is Fluoride-specific ion channel FluC.